A 273-amino-acid chain; its full sequence is 3-methyl-2-oxobutanoate hydroxymethyltransferase (273 aa).

2 residues coordinate Mg(2+): D49 and D88. 3-methyl-2-oxobutanoate is bound by residues 49–50, D88, and K118; that span reads DS. Mg(2+) is bound at residue E120. The active-site Proton acceptor is E187.

Belongs to the PanB family. Homodecamer; pentamer of dimers. Mg(2+) serves as cofactor.

Its subcellular location is the cytoplasm. The catalysed reaction is 3-methyl-2-oxobutanoate + (6R)-5,10-methylene-5,6,7,8-tetrahydrofolate + H2O = 2-dehydropantoate + (6S)-5,6,7,8-tetrahydrofolate. Its pathway is cofactor biosynthesis; (R)-pantothenate biosynthesis; (R)-pantoate from 3-methyl-2-oxobutanoate: step 1/2. Functionally, catalyzes the reversible reaction in which hydroxymethyl group from 5,10-methylenetetrahydrofolate is transferred onto alpha-ketoisovalerate to form ketopantoate. The protein is 3-methyl-2-oxobutanoate hydroxymethyltransferase of Rhizobium etli (strain ATCC 51251 / DSM 11541 / JCM 21823 / NBRC 15573 / CFN 42).